The primary structure comprises 889 residues: Terminal uridylyltransferase 3 (889 aa).

Residues 123–151 form a C2H2-type; atypical zinc finger; it reads VRCDLCAKMIESRDEEQIQEHFQVHHAAL. Positions 125, 128, 143, and 148 each coordinate Zn(2+). Residues Ser-225 and 236 to 239 each bind UTP; that span reads SDAD. Residues Asp-237 and Asp-239 each contribute to the Mg(2+) site. Residue Arg-286 coordinates RNA. Residues 394-398, Lys-419, Lys-423, and 437-438 contribute to the UTP site; these read GVRNS and SY. A PAP-associated domain is found at 505–572; that stretch reads LGGLIPLFFL…LCIDDPYEDN (68 aa). The Nucleotide recognition motif (NRM) motif lies at 565–574; the sequence is IDDPYEDNFN. Disordered regions lie at residues 675 to 702 and 829 to 849; these read NNKS…HVES and RKKS…NHAG. Positions 829 to 846 are enriched in basic residues; that stretch reads RKKSKGSKKRKNAVRRGN.

It belongs to the DNA polymerase type-B-like family. Mg(2+) serves as cofactor. Mn(2+) is required as a cofactor.

It localises to the cytoplasm. It catalyses the reaction RNA(n) + UTP = RNA(n)-3'-uridine ribonucleotide + diphosphate. Its function is as follows. Terminal uridylyltransferase which catalyzes the addition of Us to the 3'-hydroxyl group of single-stranded RNAs. Does not mediate RNA-independent UTP polymerization. The protein is Terminal uridylyltransferase 3 of Trypanosoma brucei brucei.